A 206-amino-acid polypeptide reads, in one-letter code: Thymidylate kinase (206 aa).

Residue 10-17 (GIDGAGKS) participates in ATP binding.

The protein belongs to the thymidylate kinase family.

The catalysed reaction is dTMP + ATP = dTDP + ADP. Functionally, phosphorylation of dTMP to form dTDP in both de novo and salvage pathways of dTTP synthesis. The sequence is that of Thymidylate kinase (tmk) from Neisseria meningitidis serogroup B (strain ATCC BAA-335 / MC58).